Here is a 785-residue protein sequence, read N- to C-terminus: Endonuclease MutS2 (785 aa).

Residue 335 to 342 (GPNTGGKT) participates in ATP binding. Residues 710 to 785 (LDLRGERYED…GNGVTIVEFK (76 aa)) form the Smr domain.

This sequence belongs to the DNA mismatch repair MutS family. MutS2 subfamily. As to quaternary structure, homodimer. Binds to stalled ribosomes, contacting rRNA.

Endonuclease that is involved in the suppression of homologous recombination and thus may have a key role in the control of bacterial genetic diversity. In terms of biological role, acts as a ribosome collision sensor, splitting the ribosome into its 2 subunits. Detects stalled/collided 70S ribosomes which it binds and splits by an ATP-hydrolysis driven conformational change. Acts upstream of the ribosome quality control system (RQC), a ribosome-associated complex that mediates the extraction of incompletely synthesized nascent chains from stalled ribosomes and their subsequent degradation. Probably generates substrates for RQC. This Listeria welshimeri serovar 6b (strain ATCC 35897 / DSM 20650 / CCUG 15529 / CIP 8149 / NCTC 11857 / SLCC 5334 / V8) protein is Endonuclease MutS2.